The following is a 509-amino-acid chain: Maturase K (509 aa).

This sequence belongs to the intron maturase 2 family. MatK subfamily.

Its subcellular location is the plastid. It is found in the chloroplast. Its function is as follows. Usually encoded in the trnK tRNA gene intron. Probably assists in splicing its own and other chloroplast group II introns. This chain is Maturase K, found in Solanum tuberosum (Potato).